The primary structure comprises 230 residues: Octanoyltransferase (230 aa).

The region spanning 38–215 (AGGADTLLLL…AVCAALDGVL (178 aa)) is the BPL/LPL catalytic domain. Substrate is bound by residues 76 to 83 (RGGKITWH), 145 to 147 (AIG), and 158 to 160 (GFA). Catalysis depends on cysteine 176, which acts as the Acyl-thioester intermediate.

The protein belongs to the LipB family.

The protein resides in the cytoplasm. It carries out the reaction octanoyl-[ACP] + L-lysyl-[protein] = N(6)-octanoyl-L-lysyl-[protein] + holo-[ACP] + H(+). It functions in the pathway protein modification; protein lipoylation via endogenous pathway; protein N(6)-(lipoyl)lysine from octanoyl-[acyl-carrier-protein]: step 1/2. Catalyzes the transfer of endogenously produced octanoic acid from octanoyl-acyl-carrier-protein onto the lipoyl domains of lipoate-dependent enzymes. Lipoyl-ACP can also act as a substrate although octanoyl-ACP is likely to be the physiological substrate. The chain is Octanoyltransferase from Mycobacterium bovis (strain BCG / Tokyo 172 / ATCC 35737 / TMC 1019).